The sequence spans 225 residues: MKHLFKLDPAKNLPTNDVTKLIHSGTDGFIIGGTDNVQIEAVQNLYELLVETDLPIFLEISNESMILPEADHFLIPVVLNTENSKWTHGLHKELIKEMGEFIPWKRVTSEGYVILNKDAKVAHLTEAKTDLTDEDIVAYARLAENIFHLPIFYVEYSGMYGDPEVVRKASAALSNTKFWYGGGIRSKEQAAEMAKYADTIIVGNIIYEDLEKALETATIFRKKTV.

Position 6 (Lys6) interacts with sn-glycerol 1-phosphate. Positions 8 and 34 each coordinate Mg(2+). Sn-glycerol 1-phosphate is bound by residues 153–158 (YVEYSG), Gly183, and 203–204 (GN).

This sequence belongs to the GGGP/HepGP synthase family. Group I subfamily. Homodimer. The cofactor is Mg(2+).

It catalyses the reaction sn-glycerol 1-phosphate + all-trans-heptaprenyl diphosphate = 3-heptaprenyl-sn-glycero-1-phosphate + diphosphate. It participates in membrane lipid metabolism; glycerophospholipid metabolism. Prenyltransferase that catalyzes in vivo the transfer of the heptaprenyl moiety of heptaprenyl pyrophosphate (HepPP; 35 carbon atoms) to the C3 hydroxyl of sn-glycerol-1-phosphate (G1P), producing heptaprenylglyceryl phosphate (HepGP). This reaction is an ether-bond-formation step in the biosynthesis of archaea-type G1P-based membrane lipids found in Bacillales. To a much lesser extent, is also able to use geranylgeranyl diphosphate (GGPP; C20) as the prenyl donor. The chain is Heptaprenylglyceryl phosphate synthase from Listeria monocytogenes serovar 1/2a (strain ATCC BAA-679 / EGD-e).